A 4749-amino-acid chain; its full sequence is MKPHSQTSPPSLPMPSTSCRPGQTQKPKAWNWHLDPELWARSVRQQLNTCLHFILEEKKNPWFYTLQSGLVGCSCSGQEHSWDCQMKQEDLKAVVESEQRTLLKLLLSELQSLFSAVMQDGSCEAWRYLHAVLGLLPPYREMLAGQLELLPFLEQLYCWAPKVQARLELDLLDAIDKAFPPDSSLLHSSSHVDCGLWMKRFHRGPPCSACPFVKAQWDRQQKKELATWLRPLTLPELQHCLGIVGAEVALEETPWLDSLSLLPLALATDIPVQYESSDTEQAEGEPAGRKLQVASEAPEEKALKKKSSRTPVLRSQVKSLLERDWTQKKIHFLYLNVVSDRHFNPYKLVAVPPDKVNPEHYIFSPFGILHIHPVEGSEAMTLGTWHRDCALWRELQRIPFFKNCLLRKALTCWKKNVRLCGLHRIQTFLKTHLLSAIPHFGAGMLHINRLLQEFRSVSWLPKEPDRSYELVDLQKAIAKENHKALRVLCHFLNLCTSILQLIHEDTYQMQQGLQERVQNWNRIRKGQGSIYLQRTLCRHLEKKLKQAETWLLKLGKFARLIDYMICQNLVSILEDEISSFIANTLQAPRQNPFLLSQLVFDDNGQLSPMPRVESIIQGLIKSLQSIKTSALKVLQSTDLRTSRDLLYSEDNKDQDSNAEFLMPKFHGKASDAVRLFCGPNVGYVWPWKSHAITDVLEVRGHKLRGQFLHPNYDHVQEDLDKNAGIQQALAVQQSLLEDMRQEVQEFCNKHKWVEGIYEFLKAWSSQKLEDLRGSPINNYVNLVIQLKKWQERVSNMSVELLTKGKLLFLSGHDVQEELGSKLNNMRKNILEQAQNECWSRNQQLMTELTEFLRVFQTISSDIHAIAQCSQKLSEANEQYCQLEERVEYVRSLHDLIRNHCALFIAENETLDIALLDLWEAFQFERSQVSEFLLSKQHAIVPRLQQLMAAALAELEGLLAKALSGPFMDPSQEQRSTEQQLGALEHQFLNILNNFNALCNAYCTFTGYKKPMSPPASGNRPIVLQQRIWRLYRIISENLGEWKCVAFSKFNLSMAREKTDAWLTEAVRLSTALGLQSPVLQRCMRMLEEFRAYLPLLIKLGNLQLQDLNTQSLLRALGLGSLRSLDLLTLGQMLNYPLLEFAERINQVWQYDKERIHAQEILQQMQQYWEGRQLRLLNFILHVPYKPPTSERSKRPALRSPQWELVGKDSGTFLLSDYSSLQDAIQNSLQALFKILAIQKSGQLHKIALEWVAIMYGLGALLEVWVAFQQKWIFLNKVLHEMKIEFPAPELNARFKAMDDQYRTLMRISVADPMVLSLILPNTKRSPYFQGQHLQQMLKAGSGELEAIIMALEDVLYGVCANFPRLFFLSDSELVALLAAPLDTREAQLWAQRCFPHIKAVNFRSKSTKKKINQDSSSSTESAETIAVLAAGGEEVKLQEPLPLHTDLPKWLASLEKCLRFIIVNLLQSCVATRLAQGPSLIKALKAMPQQRQMPMQVYVQHWLDAVQVFPWQCILVAEEVVWRAEMEEALLESRTMHMRSVHVHNLEVLVQFIRSQRSSQDGKSLPSVRQTSLFSTLLVKAVTHRDIAQLLEKNQVSDLTDFHWVRQLKYHLGSSHLNLKSPVQCLTTIASTEPSVSPAACWIDVLGRSFMYNYEYMGPKLGPLPSLMHERQVFILLMALDEVAYGAILGRDGLGKAETVNSLAWTLGRQLVIMPCLPQIEFQCLRNYLNGALQSGAWLLLENVNQLPSSLLSALGQRLDELHYLYAPLYQKASKNISTINPTKPLLLGGGFFEKHQVSMRLGFGCFLTLHSLGPDIPANLHLLLRPVALALPDLQRVAELNLLGAGVQDASQMASRLSKLFSLERELVSGNLPCRLPLLKQVLEHTIQTLNTSQEKKSQQPYDPAASEEAALLRALLHSPLFSILDGLRLQKLQELLCGIFPNASHVLAEPVSHRLIKSVVVEELQQLGLFPASNTVTSLEQLSQALSRASGILLLGPAGSGKSTCWRSLFKIQNRLAAMEHTSTKGFQSVEIVHLYPSVLNSKEYLGWSEGPSWHYGIFPKLLHAAPYCKSVGSEEPSEKFTGIQQWIICDGAPNHAWTDSVTCLLRDPPQLSLPNGQQIARPLGTFFLIEVAEAAGMSPTVLGRCALVWCSGEQTWHSMLSVLMASLPHEYHLQQETITEFNYLAEVLVPSVLRFLTRIGASSQLQVHGHQAVCPGVAEVTSLVRILRALLDPLLHLFEEEKSYTKEDFSGSDLVTQNFKSSKTRVQSDRVNVNKKQRRHLLAISSFLFAIIWSFGAHLPSRHWPLFDDFMKKSISSLPNYPEPPPSALVFDLHVNFEDGTLVPFTGQYLSTHVKGNLGSFQPSSQTEQLLYVVDLLLSNGQPVLLAGEIATGKSAFVEVLVKPNYPVIHSPIHPALNSTHLRHLLSRGVHGQTQASSIPGHHQDSKGSILFLMEDLHLATFDPEKNCQPVLETLRQAMEGTIYAHNTLELQTLQTTVNFLATATVPGYSERPLCPRLYRLFTVLALNSMTQDTLLSRHVPSIQAWLERFPSVEREHTLARALVRASVEAWEAVCKCFMPSPLRPHYRFSPHSVSHILGSLQLLPTRMGSRGFAETFHHQEYLRRVSGLRGTRLTIMMSMRVMVRLWLHEAQRTFCDRLDSDRERSHCAKLLLEVAQNVFCGGPGSESLAKDCEEEEVEEEKVPEVESEEEIAQWETLSNSDSGSEEEEDPYGLQATTGSFLSENSLAPFPRKSVNKENTENVSQMAEQEEDIRDSSSKLQSKTPKHEWQMAPQMDLSLPLLLPVLLFYPQESPSDLVFSLELTLGSNFESPNLYLERQWENLEKQLVATAVRLKMNSGFSQCPVMVQHVAHLVRVLARPQQHALLLSEFRGTGRYTAIILASSICQAHLHYLSVESEEAIFQCLRDASWHAGLLNQPVALLVPEGVNVAIFCRLLALATSGSFPDQYTEADLDNIEEHFPKENIANKHAIKRDTILNRFYQQVCNNLHMFFMVGDNQAQNQLAPTLFLNLLQLTIASVERYEPWDQASLVRIAQFCLENDHSLPLDDGSLKYPDFKHLIPNVANIMARIHVSSACYHKHMCPALPLVTPKTFQDFLDMFLQQQQQMVLQMRMRASRIQTALKTLRLMVERHSTQTSLLTDLEAQLKGSYKSVGICQGQLEQSKIMYRQKMIECQHQESLIENLVRQHDALKAQQEVFLEQMGKAFVGPLSQLRVADFEEIRSYRAPPESVVKVTDALCDLFHQETGWSSAKQLLCTEDFYQELVFFPKEKLTDSELVKLNEALRAPGMSDAALRSVSIPAANLAVWLWAVLRYGLAQRRGLPTGLLLRQVDATLAREQARLGQFQFQAHDLLEQTRSLTKKLEDAQVSHNHVMETLNQAQCGNFQKWPMESALLTPMHMWTTQLQKLQEQAKTVFGDALLCSAAIIYLGPFPPQRRQELLEKWLSLCQGSEEALDPDDVARALRQKSVGVPKNPLLPTRTPFSILTLLSYGSELHQWDRDLKPQAKSARLLGLLLRSHIHFSSSRWPLLIDPSNQAIMWLNPLPPKQNRSLEPSPKESKEKFHVTKQDSGDNTEDELEDENNEEEDEANEQRKEQKAEENKIQGENEQEVQETEKENEPESSGSHSSLPSETQSLPSCLTVLSGTDPELGPQLLEAAANGLPVLLTNVELSLGCQELQWLLSKKNLSPPSVQPGFCLFLSTTFPIHALSRVLGFEMLKGLNVLDLGLNMEILEEQMLHEILCRERPELETRWQDLKIRAADTYEAMKADEEQLLVTLLRQNQKRQKPSKFLRKMVRTQAKICQLNAQMEELEDQKQEVVALWAPYRPVAYHGMAMVEALSPLQNLLPSFCMTSENWLAVIRRAIDSMKSYDSYRGEDLPSHLLRLKIHLARQLLTNTVVALGLIQTPLVGAFGALAMLQVTTKTPKLERLALWPGLSASPSSGHNMQIPGVIRPAWLSSKAWEECGALELLPPFAGLCESLAGHSGVWQDYLSLSSTVLGPAPGPNSEPLSLFQKLILWRVLRPDCLAGALADLTTSLLGRPLDENLGAPTMIFEHIQPTQPILILLPPPGHPTATLHPVTVIRKLAANHEKPQHLHVIALGSEDWDPVSTVVNTLCQAMLQGHWLVLDNCHLMPFWPRELLQPLQGLLDRARVVSDSELLAEPESRSVVTVHRDFRLWLIVPTEASTSLPGMLTQSSMPVFWNQSLELGRILIDSLDSQQGLCTQPLTQTLPLFFLHGLLLHRQLYGLKLQAHRGRWSQVTLTRALQIQEQLWASLGNPSAALLELTASVLYGGSLGDLEDREALVSLTRTCLNPRNMNWDQPHTPQYLLATLMPSPELGELDARTDCKAQMHLLPTPPEPRTCGLNEAPQAWLMRRQSRVLLNALQKCSSTWVPTVCGGIAQRKERQLQQRLAQAKKRLVALQALLTNNRIRSGQCVTPWAVLGPNARRPLEGFLETEVLELKHLVGTLLCDLDCLLQQLKGGTPCTSSRCAKVAQALWAGHLPQPWRSHALAGSQLPWLWLRQLSRRGHLLIRYLDSGMSENANKPERIFHLSAFRHPGRLLLALRWEAVLENSVHNPNLPGHQDSISGSLPPKWQELSNHPLHIWVENGPNPKVPKMGLLLTGLQLQHAEWDQTDGALQDSFSSQPCPLPPVSISTQARRGKDAPVSAGLGMYSCPVYMTGPFGTTKLHSKNILMHLPLPTRLSPDTCIQRRVHVCSPTLT.

The segment covering Met-1–Ser-18 has biased composition (low complexity). Disordered stretches follow at residues Met-1–Pro-27, Glu-275–Ser-308, and Glu-2690–Ser-2785. Acidic residues predominate over residues Cys-2696–Ala-2716. Positions Gln-2738–Ser-2749 are enriched in polar residues. The stretch at Cys-3197–Gln-3224 forms a coiled coil. Positions Pro-3568–Ser-3667 are disordered. Residues Ser-3578–Ser-3593 are compositionally biased toward basic and acidic residues. Residues Gly-3594–Glu-3636 adopt a coiled-coil conformation. Residues Asp-3595 to Ala-3612 show a composition bias toward acidic residues. Residues Asn-3613 to Gly-3628 are compositionally biased toward basic and acidic residues. The span at Glu-3644 to Glu-3655 shows a compositional bias: low complexity. The span at Thr-3656 to Ser-3667 shows a compositional bias: polar residues. Coiled coils occupy residues Met-3818–Gln-3838 and Glu-4431–Leu-4451.

Belongs to the dynein heavy chain family. As to expression, expressed in spermatozoa (at protein level).

It localises to the cell projection. The protein localises to the cilium. Its subcellular location is the flagellum. Functionally, essential for the normal function of sperm flagella axonemes. The polypeptide is Dynein heavy chain domain-containing protein 1 (Dnhd1) (Mus musculus (Mouse)).